A 553-amino-acid polypeptide reads, in one-letter code: Solute carrier family 22 member 12 (553 aa).

Residues 10–30 form a helical membrane-spanning segment; sequence VGGLGRFQLFQTVALVTPILW. N-linked (GlcNAc...) asparagine glycosylation is present at asparagine 56. A run of 11 helical transmembrane segments spans residues 146–166, 182–202, 204–224, 232–252, 260–280, 351–371, 378–398, 412–432, 435–455, 466–486, and 495–515; these read PMAQ…CGHA, LVSV…YCLF, FLLA…LMEW, LVMT…GSVA, MLQL…WWLP, IISM…ALDL, IFLL…GSLL, FLVL…GMGV, SALA…ITIF, MTAV…GPLV, and WMPL…ALLL. Serine 534 carries the post-translational modification Phosphoserine. Position 542 is a phosphothreonine (threonine 542).

The protein belongs to the major facilitator (TC 2.A.1) superfamily. Organic cation transporter (TC 2.A.1.19) family. In terms of assembly, interacts with PDZK1. Post-translationally, N-glycosylated. Detected in kidney (at protein level). Detected in kidney cortex, in proximal tubules.

Its subcellular location is the apical cell membrane. The enzyme catalyses urate(out) + (S)-lactate(in) = urate(in) + (S)-lactate(out). It carries out the reaction nicotinate(in) + urate(out) = nicotinate(out) + urate(in). The catalysed reaction is urate(out) + n chloride(in) = urate(in) + n chloride(out). It catalyses the reaction orotate(out) + nicotinate(in) = orotate(in) + nicotinate(out). Its function is as follows. Electroneutral antiporter that translocates urate across the apical membrane of proximal tubular cells in exchange for monovalent organic or inorganic anions. Involved in renal reabsorption of urate and helps maintaining blood levels of uric acid. Mediates urate uptake by an exchange with organic anions such as (S)-lactate and nicotinate, and inorganic anion Cl(-). Other inorganic anions such as Br(-), I(-) and NO3(-) may also act as counteranions that exchange for urate. Also mediates orotate tubular uptake coupled with nicotinate efflux and to a lesser extent with lactate efflux, therefore displaying a potential role in orotate renal reabsorption. Orotate transport is Cl(-)-dependent. The protein is Solute carrier family 22 member 12 of Mus musculus (Mouse).